Reading from the N-terminus, the 451-residue chain is Sex peptide receptor-related protein 2 (451 aa).

Residues 1-63 lie on the Extracellular side of the membrane; that stretch reads MNYEVYCGNA…DNLEIVVYGQ (63 aa). An N-linked (GlcNAc...) asparagine glycan is attached at Asn-15. A helical transmembrane segment spans residues 64–84; that stretch reads IFPILVLFAVFANAAVALVLS. The Cytoplasmic portion of the chain corresponds to 85-97; it reads KKHMITPTNVVLK. The chain crosses the membrane as a helical span at residues 98–118; sequence YMAIAELLVGLVPLPWTLFFF. The Extracellular segment spans residues 119-140; it reads SMGNIKETHRLELWWCYLQKYS. Cys-134 and Cys-225 form a disulfide bridge. Residues 141–161 form a helical membrane-spanning segment; sequence MDAFPPVFHMIAMWLTVLLAA. Topologically, residues 162–183 are cytoplasmic; sequence QRYVSISHPLHSRSACNVKNVR. The helical transmembrane segment at 184–204 threads the bilayer; that stretch reads LATMIITVTSFLCGLPKSFDY. The Extracellular portion of the chain corresponds to 205 to 251; sequence EYETVHGWIYSHGNWTYASSCVMMPTAILTNMGQTVYFNIYFWTRAL. The N-linked (GlcNAc...) asparagine glycan is linked to Asn-218. A helical transmembrane segment spans residues 252–272; sequence GFIILPSFLLVLLNGLLIKGI. Residues 273–301 are Cytoplasmic-facing; the sequence is RRAQRRKLRLLREKRSEEAARQRDSNSTS. A helical membrane pass occupies residues 302 to 322; sequence LMLVAIVSIFLIVNLPQAIFM. Over 323–334 the chain is Extracellular; sequence GLLCVCETFTIK. The chain crosses the membrane as a helical span at residues 335–355; the sequence is IPILEGTFPAVFLIASNMIVI. Over 356-451 the chain is Cytoplasmic; it reads ATYPINFGIY…TQFTTMDRSD (96 aa).

The protein belongs to the G-protein coupled receptor 1 family. In terms of tissue distribution, expressed in head neurons including the ASE sensory neurons and the ASI and AWB chemosensory neurons, the midbody neurons SDQ, and motor neurons in the tail.

Its subcellular location is the cell membrane. Functionally, G-protein coupled receptor for the neuropeptide like protein nlp-38. Plays a role in several types of aversive gustatory associative learning including gustatory plasticity and salt avoidance learning. Its role in salt avoidance learning may be through activation of the transcription factor crh-1/CREB and de novo transcription and translation, which in turn promotes the formation of long-term memory. The sequence is that of Sex peptide receptor-related protein 2 from Caenorhabditis elegans.